Reading from the N-terminus, the 232-residue chain is Probable anion ABC transporter permease protein HVO_1887 (232 aa).

Residues 16-217 (TAVSLYVSTA…ALVLGVNALG (202 aa)) enclose the ABC transmembrane type-1 domain. 5 helical membrane passes run 23 to 43 (STAAVALSAALGLPISLAVGF), 55 to 75 (VISTGMGFPSVVVGLVVLLVL), 93 to 113 (MILSQTILALPVLVSVSLSAV), 146 to 166 (IVTALLAAYGRAISEVGSVLI), and 198 to 218 (TGIALGAILLALVLGVNALGA).

This sequence belongs to the binding-protein-dependent transport system permease family. The complex is composed of two ATP-binding proteins (HVO_1886), two transmembrane proteins (HVO_1887) and a solute-binding protein (HVO_1888).

Its subcellular location is the cell membrane. Its function is as follows. Part of an ABC transporter complex involved in anions import. Responsible for the translocation of the substrate across the membrane. This is Probable anion ABC transporter permease protein HVO_1887 from Haloferax volcanii (strain ATCC 29605 / DSM 3757 / JCM 8879 / NBRC 14742 / NCIMB 2012 / VKM B-1768 / DS2) (Halobacterium volcanii).